The chain runs to 353 residues: Photosystem II protein D1 (353 aa).

Thr2 bears the N-acetylthreonine mark. Position 2 is a phosphothreonine (Thr2). Transmembrane regions (helical) follow at residues 29 to 46, 118 to 133, and 142 to 156; these read YIGWFGVLMIPTLLTATS, HFLLGVACYMGREWEL, and WIAVAYSAPVAAATA. His118 provides a ligand contact to chlorophyll a. Tyr126 serves as a coordination point for pheophytin a. Asp170 and Glu189 together coordinate [CaMn4O5] cluster. The chain crosses the membrane as a helical span at residues 197-218; that stretch reads FHMLGVAGVFGGSLFSAMHGSL. His198 is a binding site for chlorophyll a. A quinone contacts are provided by residues His215 and 264 to 265; that span reads SF. A Fe cation-binding site is contributed by His215. Fe cation is bound at residue His272. Residues 274–288 traverse the membrane as a helical segment; that stretch reads FLAAWPVVGIWFTAL. [CaMn4O5] cluster-binding residues include His332, Glu333, Asp342, and Ala344. Positions 345-353 are excised as a propeptide; that stretch reads AIEAPSTNG.

It belongs to the reaction center PufL/M/PsbA/D family. As to quaternary structure, PSII is composed of 1 copy each of membrane proteins PsbA, PsbB, PsbC, PsbD, PsbE, PsbF, PsbH, PsbI, PsbJ, PsbK, PsbL, PsbM, PsbT, PsbX, PsbY, PsbZ, Psb30/Ycf12, at least 3 peripheral proteins of the oxygen-evolving complex and a large number of cofactors. It forms dimeric complexes. The cofactor is The D1/D2 heterodimer binds P680, chlorophylls that are the primary electron donor of PSII, and subsequent electron acceptors. It shares a non-heme iron and each subunit binds pheophytin, quinone, additional chlorophylls, carotenoids and lipids. D1 provides most of the ligands for the Mn4-Ca-O5 cluster of the oxygen-evolving complex (OEC). There is also a Cl(-1) ion associated with D1 and D2, which is required for oxygen evolution. The PSII complex binds additional chlorophylls, carotenoids and specific lipids.. Post-translationally, tyr-161 forms a radical intermediate that is referred to as redox-active TyrZ, YZ or Y-Z. In terms of processing, C-terminally processed by CTPA; processing is essential to allow assembly of the oxygen-evolving complex and thus photosynthetic growth.

It is found in the plastid. The protein resides in the chloroplast thylakoid membrane. The catalysed reaction is 2 a plastoquinone + 4 hnu + 2 H2O = 2 a plastoquinol + O2. Functionally, photosystem II (PSII) is a light-driven water:plastoquinone oxidoreductase that uses light energy to abstract electrons from H(2)O, generating O(2) and a proton gradient subsequently used for ATP formation. It consists of a core antenna complex that captures photons, and an electron transfer chain that converts photonic excitation into a charge separation. The D1/D2 (PsbA/PsbD) reaction center heterodimer binds P680, the primary electron donor of PSII as well as several subsequent electron acceptors. In Citrus sinensis (Sweet orange), this protein is Photosystem II protein D1.